Here is a 127-residue protein sequence, read N- to C-terminus: Large ribosomal subunit protein uL24A (127 aa).

It belongs to the universal ribosomal protein uL24 family. As to quaternary structure, component of the large ribosomal subunit (LSU). Mature yeast ribosomes consist of a small (40S) and a large (60S) subunit. The 40S small subunit contains 1 molecule of ribosomal RNA (18S rRNA) and 33 different proteins (encoded by 57 genes). The large 60S subunit contains 3 rRNA molecules (25S, 5.8S and 5S rRNA) and 46 different proteins (encoded by 81 genes).

The protein localises to the cytoplasm. Its function is as follows. Component of the ribosome, a large ribonucleoprotein complex responsible for the synthesis of proteins in the cell. The small ribosomal subunit (SSU) binds messenger RNAs (mRNAs) and translates the encoded message by selecting cognate aminoacyl-transfer RNA (tRNA) molecules. The large subunit (LSU) contains the ribosomal catalytic site termed the peptidyl transferase center (PTC), which catalyzes the formation of peptide bonds, thereby polymerizing the amino acids delivered by tRNAs into a polypeptide chain. The nascent polypeptides leave the ribosome through a tunnel in the LSU and interact with protein factors that function in enzymatic processing, targeting, and the membrane insertion of nascent chains at the exit of the ribosomal tunnel. This Saccharomyces cerevisiae (strain ATCC 204508 / S288c) (Baker's yeast) protein is Large ribosomal subunit protein uL24A.